A 1052-amino-acid polypeptide reads, in one-letter code: Membrane-bound transcription factor site-1 protease (1052 aa).

The first 17 residues, M1–G17, serve as a signal peptide directing secretion. A propeptide spanning residues K18 to L186 is cleaved from the precursor. N-linked (GlcNAc...) asparagine glycosylation is present at N148. The residue at position 168 (S168) is a Phosphoserine. Residues R187 to G999 are Lumenal-facing. Positions P190–Y472 constitute a Peptidase S8 domain. D218 serves as the catalytic Charge relay system. N236 carries N-linked (GlcNAc...) asparagine glycosylation. The active-site Charge relay system is the H249. N305 carries an N-linked (GlcNAc...) asparagine glycan. S414 acts as the Charge relay system in catalysis. N-linked (GlcNAc...) asparagine glycosylation is found at N515 and N728. A compositionally biased stretch (polar residues) spans P877–R887. The tract at residues P877–M900 is disordered. N939 carries N-linked (GlcNAc...) asparagine glycosylation. A helical membrane pass occupies residues Q1000–S1022. The Cytoplasmic segment spans residues K1023–V1052. The span at S1026 to R1037 shows a compositional bias: basic residues. The interval S1026–V1052 is disordered.

Belongs to the peptidase S8 family. In terms of assembly, interacts with LYSET; this interaction bridges GNPTAB to MBTPS1. It depends on Ca(2+) as a cofactor. The 148 kDa zymogen is processed progressively into two membrane-bound 120 and 106 kDa forms in the endoplasmic reticulum, and late into a secreted 98 kDa form. The propeptide is autocatalytically removed through an intramolecular cleavage after Leu-186. Further cleavage generates 14, 10, and 8 kDa intermediates.

It is found in the endoplasmic reticulum membrane. It localises to the golgi apparatus membrane. It catalyses the reaction Processes precursors containing basic and hydrophobic/aliphatic residues at P4 and P2, respectively, with a relatively relaxed acceptance of amino acids at P1 and P3.. Inhibited by divalent copper and zinc ions, but not by nickel or cobalt. Inhibited by its prosegment, but not smaller fragments. Inhibited by 4-(2-aminoethyl)benzenesulfonyl fluoride (AEBSF), a serine protease inhibitor. Functionally, serine protease that cleaves after hydrophobic or small residues, provided that Arg or Lys is in position P4: known substrates include SREBF1/SREBP1, SREBF2/SREBP2, BDNF, GNPTAB, ATF6, ATF6B and FAM20C. Cleaves substrates after Arg-Ser-Val-Leu (SREBP2), Arg-His-Leu-Leu (ATF6), Arg-Gly-Leu-Thr (BDNF) and its own propeptide after Arg-Arg-Leu-Leu. Catalyzes the first step regulated intramembrane proteolysis activation of the sterol regulatory element-binding proteins (SREBPs) SREBF1/SREBP1 and SREBF2/SREBP2. Also mediates the first step of the regulated intramembrane proteolytic activation of the cyclic AMP-dependent transcription factor ATF-6 (ATF6 and ATF6B). Mediates the protein cleavage of GNPTAB into subunit alpha and beta, thereby participating in biogenesis of lysosomes. Cleaves the propeptide from FAM20C which is required for FAM20C secretion from the Golgi apparatus membrane and for enhancement of FAM20C kinase activity, promoting osteoblast differentiation and biomineralization. Involved in the regulation of M6P-dependent Golgi-to-lysosome trafficking of lysosomal enzymes. It is required for the activation of CREB3L2/BBF2H7, a transcriptional activator of MIA3/TANGO and other genes controlling mega vesicle formation. Therefore, it plays a key role in the regulation of mega vesicle-mediated collagen trafficking. In astrocytes and osteoblasts, upon DNA damage and ER stress, mediates the first step of the regulated intramembrane proteolytic activation of the transcription factor CREB3L1, leading to the inhibition of cell-cycle progression. The chain is Membrane-bound transcription factor site-1 protease (Mbtps1) from Mus musculus (Mouse).